The sequence spans 196 residues: Phosphoheptose isomerase (196 aa).

In terms of domain architecture, SIS spans 38–196 (LIAGYRAGAR…VEHALFAPRQ (159 aa)). Residue 53–55 (NGG) coordinates substrate. The Zn(2+) site is built by His62 and Glu66. Substrate is bound by residues Glu66, 95–96 (ND), 121–123 (STS), Ser126, and Gln173. Zn(2+)-binding residues include Gln173 and His181.

The protein belongs to the SIS family. GmhA subfamily. Zn(2+) is required as a cofactor.

The protein localises to the cytoplasm. It carries out the reaction 2 D-sedoheptulose 7-phosphate = D-glycero-alpha-D-manno-heptose 7-phosphate + D-glycero-beta-D-manno-heptose 7-phosphate. It functions in the pathway carbohydrate biosynthesis; D-glycero-D-manno-heptose 7-phosphate biosynthesis; D-glycero-alpha-D-manno-heptose 7-phosphate and D-glycero-beta-D-manno-heptose 7-phosphate from sedoheptulose 7-phosphate: step 1/1. In terms of biological role, catalyzes the isomerization of sedoheptulose 7-phosphate in D-glycero-D-manno-heptose 7-phosphate. This is Phosphoheptose isomerase from Mycobacterium bovis (strain ATCC BAA-935 / AF2122/97).